Reading from the N-terminus, the 1222-residue chain is Kinesin-related protein 9 (1222 aa).

Over residues 1 to 25 (MDNNNNNFSTPKQPTINSTTGGQLR) the composition is skewed to polar residues. Disordered regions lie at residues 1–55 (MDNN…ITNS), 75–165 (MDSL…STNI), and 188–343 (SSNT…TQPL). Residues 26–55 (SRSNSSPSTSSISTPRNGSTTATTSSITNS) show a composition bias toward low complexity. The span at 75–85 (MDSLSTPMSQS) shows a compositional bias: polar residues. Low complexity-rich tracts occupy residues 122–165 (SFIS…STNI), 194–209 (SSLP…PLSN), 216–238 (NHHL…ISTT), and 254–325 (NLTT…RTPI). Polar residues predominate over residues 326 to 343 (QNFNSVGGVNITSKTQPL). Positions 350-719 (SIQAVCRFRP…LNFGQRAQSV (370 aa)) constitute a Kinesin motor domain. 438-445 (GQTGAGKT) contributes to the ATP binding site. Residues 724–1026 (LQNVEESHSE…DTLTNKLEIQ (303 aa)) are a coiled coil. The tract at residues 1144-1174 (NINNNNNIKNNNNNNKLKSKKVGSSSSSSSN) is disordered. Residues 1183 to 1203 (ILFFLIILVILFFLMVAVGLT) traverse the membrane as a helical segment.

It belongs to the TRAFAC class myosin-kinesin ATPase superfamily. Kinesin family.

It is found in the membrane. Its subcellular location is the cytoplasm. The protein localises to the cytoskeleton. In terms of biological role, microtubule-associated force-producing protein that plays a role in organelle transport. Its motor activity is directed toward the microtubule's plus end. The sequence is that of Kinesin-related protein 9 (kif9) from Dictyostelium discoideum (Social amoeba).